A 356-amino-acid chain; its full sequence is Holliday junction branch migration complex subunit RuvB (356 aa).

A large ATPase domain (RuvB-L) region spans residues 4-191 (TDKLATEQRI…FGIVARLEFY (188 aa)). ATP is bound by residues Leu-30, Arg-31, Gly-72, Lys-75, Thr-76, Thr-77, 138-140 (EDY), Arg-181, Tyr-191, and Arg-228. Thr-76 lines the Mg(2+) pocket. Positions 192-262 (DADQLSRIVR…VADAALAMLD (71 aa)) are small ATPAse domain (RuvB-S). A head domain (RuvB-H) region spans residues 265 to 356 (PVGFDLMDRK…RDEWDTPDGK (92 aa)). Residues Arg-301, Arg-320, and Arg-325 each coordinate DNA.

Belongs to the RuvB family. As to quaternary structure, homohexamer. Forms an RuvA(8)-RuvB(12)-Holliday junction (HJ) complex. HJ DNA is sandwiched between 2 RuvA tetramers; dsDNA enters through RuvA and exits via RuvB. An RuvB hexamer assembles on each DNA strand where it exits the tetramer. Each RuvB hexamer is contacted by two RuvA subunits (via domain III) on 2 adjacent RuvB subunits; this complex drives branch migration. In the full resolvosome a probable DNA-RuvA(4)-RuvB(12)-RuvC(2) complex forms which resolves the HJ.

The protein resides in the cytoplasm. The catalysed reaction is ATP + H2O = ADP + phosphate + H(+). Its function is as follows. The RuvA-RuvB-RuvC complex processes Holliday junction (HJ) DNA during genetic recombination and DNA repair, while the RuvA-RuvB complex plays an important role in the rescue of blocked DNA replication forks via replication fork reversal (RFR). RuvA specifically binds to HJ cruciform DNA, conferring on it an open structure. The RuvB hexamer acts as an ATP-dependent pump, pulling dsDNA into and through the RuvAB complex. RuvB forms 2 homohexamers on either side of HJ DNA bound by 1 or 2 RuvA tetramers; 4 subunits per hexamer contact DNA at a time. Coordinated motions by a converter formed by DNA-disengaged RuvB subunits stimulates ATP hydrolysis and nucleotide exchange. Immobilization of the converter enables RuvB to convert the ATP-contained energy into a lever motion, pulling 2 nucleotides of DNA out of the RuvA tetramer per ATP hydrolyzed, thus driving DNA branch migration. The RuvB motors rotate together with the DNA substrate, which together with the progressing nucleotide cycle form the mechanistic basis for DNA recombination by continuous HJ branch migration. Branch migration allows RuvC to scan DNA until it finds its consensus sequence, where it cleaves and resolves cruciform DNA. In Burkholderia cenocepacia (strain ATCC BAA-245 / DSM 16553 / LMG 16656 / NCTC 13227 / J2315 / CF5610) (Burkholderia cepacia (strain J2315)), this protein is Holliday junction branch migration complex subunit RuvB.